Reading from the N-terminus, the 304-residue chain is Retrotransposon Gag-like protein 4 (304 aa).

The segment at 276–293 adopts a CCHC-type zinc-finger fold; it reads QLCVYCNQAGHFTRDCLA.

In adults, expressed in brain, eye, kidney, ovary and testis. Weakly expressed in thymus, heart and muscle.

Involved in cognitive function in the brain, possibly via the noradrenergic system. The chain is Retrotransposon Gag-like protein 4 from Mus musculus (Mouse).